A 26-amino-acid polypeptide reads, in one-letter code: Glycyl-poneratoxin (26 aa).

At R25 the chain carries Arginine amide; in delta-paraponeritoxin-Pc1a.

Post-translationally, the glycine-PoTx is a non-amidated form of poneratoxin, with an extra-Gly at C-terminus. This loss of amidation does not alter toxin activity on Nav1.7/SCN9A. In terms of tissue distribution, expressed by the venom gland.

It localises to the secreted. In terms of biological role, toxin that causes pain in vertebrates by targeting tetrodotoxin (TTX)-sensitive sodium channels in peripheral sensory neurons. Also blocks synaptic transmission and stimulates smooth muscle contraction. Converts the normally rapidly activating and inactivating sodium channel current into one that does not inactivate. Is active on both Nav1.6/SCN8A and Nav1.7/SCN9A sodium channels, with a much potent activity on Nav1.6/SCN8A (EC(50)=97 nM on human channels) than on Nav1.7/SCN9A (EC(50)=2.3 uM on human and EC(50)=1.8 uM on mouse channels). On these channels, causes a sustained current, a reduction in peak current amplitude and a hyperpolarising shift. Modulates Nav1.7/SCN9A in a non-competitive manner with TTX or tetracaine. Toxin-induced persistant current is very slowly reversible with repeated wash steps over 30 minutes. In vivo, shallow intraplantar injection in mice causes immediate, long-lasting and near-maximal nocifensive behaviors, which decrease with coinjection of TTX. When tested on insects, causes paralysis but not mortality at high doses. The chain is Glycyl-poneratoxin from Paraponera clavata (Bullet ant).